Reading from the N-terminus, the 317-residue chain is Xylose/arabinose import permease protein XacH (317 aa).

The next 6 membrane-spanning stretches (helical) occupy residues 40 to 60, 98 to 118, 132 to 152, 179 to 199, 241 to 261, and 290 to 310; these read GIPF…NFAI, LVLL…LAIL, VYLL…LWMF, IALG…TMVV, AAVV…ALVG, and AAIA…YLYY. The ABC transmembrane type-1 domain occupies 94–309; that stretch reads AQNNLVLLVG…ALGVIGPYLY (216 aa).

It belongs to the binding-protein-dependent transport system permease family. In terms of assembly, the complex is composed of two ATP-binding proteins (XacJ and XacK), two transmembrane proteins (XacH and XacI) and a solute-binding protein (XacG).

The protein resides in the cell membrane. Part of the ABC transporter complex XacGHIJK involved in the uptake of xylose and arabinose. Responsible for the translocation of the substrate across the membrane. This is Xylose/arabinose import permease protein XacH from Haloferax volcanii (strain ATCC 29605 / DSM 3757 / JCM 8879 / NBRC 14742 / NCIMB 2012 / VKM B-1768 / DS2) (Halobacterium volcanii).